Reading from the N-terminus, the 222-residue chain is RNA chaperone ProQ (222 aa).

Basic and acidic residues predominate over residues 94-113 (EHADHAKQQLDESKAKAAEK). A disordered region spans residues 94 to 171 (EHADHAKQQL…PAKLTDSDLQ (78 aa)). Positions 114-131 (RKAKLAQQPKRKDKRQFN) are enriched in basic residues. A compositionally biased stretch (basic and acidic residues) spans 133–148 (PKGEKSANSDHADTKR). The span at 155-164 (NRPNTTPPAK) shows a compositional bias: low complexity.

This sequence belongs to the ProQ family.

The protein resides in the cytoplasm. Functionally, RNA chaperone with significant RNA binding, RNA strand exchange and RNA duplexing activities. The sequence is that of RNA chaperone ProQ from Alteromonas mediterranea (strain DSM 17117 / CIP 110805 / LMG 28347 / Deep ecotype).